A 159-amino-acid polypeptide reads, in one-letter code: Phosphopantetheine adenylyltransferase (159 aa).

Thr10 contributes to the substrate binding site. Residues Thr10 to Phe11 and His18 each bind ATP. Positions 42, 74, and 88 each coordinate substrate. Residues Gly89 to Arg91, Glu99, and Trp124 to Ser130 contribute to the ATP site.

The protein belongs to the bacterial CoaD family. In terms of assembly, homohexamer. Mg(2+) is required as a cofactor.

It is found in the cytoplasm. The catalysed reaction is (R)-4'-phosphopantetheine + ATP + H(+) = 3'-dephospho-CoA + diphosphate. It functions in the pathway cofactor biosynthesis; coenzyme A biosynthesis; CoA from (R)-pantothenate: step 4/5. Its function is as follows. Reversibly transfers an adenylyl group from ATP to 4'-phosphopantetheine, yielding dephospho-CoA (dPCoA) and pyrophosphate. This is Phosphopantetheine adenylyltransferase from Yersinia pestis.